We begin with the raw amino-acid sequence, 450 residues long: Glucose-6-phosphate isomerase (450 aa).

The residue at position 39 (Thr39) is a Phosphothreonine. The Proton donor role is filled by Glu291. Active-site residues include His312 and Lys426.

This sequence belongs to the GPI family.

Its subcellular location is the cytoplasm. It carries out the reaction alpha-D-glucose 6-phosphate = beta-D-fructose 6-phosphate. Its pathway is carbohydrate biosynthesis; gluconeogenesis. It functions in the pathway carbohydrate degradation; glycolysis; D-glyceraldehyde 3-phosphate and glycerone phosphate from D-glucose: step 2/4. Its function is as follows. Catalyzes the reversible isomerization of glucose-6-phosphate to fructose-6-phosphate. The chain is Glucose-6-phosphate isomerase from Bacillus anthracis.